The chain runs to 130 residues: Small ribosomal subunit protein uS9 (130 aa).

This sequence belongs to the universal ribosomal protein uS9 family. Part of the 30S ribosomal subunit.

The protein is Small ribosomal subunit protein uS9 (rpsI) of Bacillus subtilis (strain 168).